A 187-amino-acid chain; its full sequence is UPF0301 protein PBPRA3139 (187 aa).

The protein belongs to the UPF0301 (AlgH) family.

This Photobacterium profundum (strain SS9) protein is UPF0301 protein PBPRA3139.